We begin with the raw amino-acid sequence, 587 residues long: Estrogen receptor (587 aa).

The modulating (transactivation AF-1) stretch occupies residues 1-176; the sequence is MTLHTKTSGV…SMESTKETRY (176 aa). NR C4-type zinc fingers lie at residues 177–197 and 213–237; these read CAVC…CEGC and CPAT…LRKC. Positions 177-242 form a DNA-binding region, nuclear receptor; that stretch reads CAVCNDYASG…RLRKCYEVGM (66 aa). The interval 243–302 is hinge; the sequence is MKGGIRKDRRGGRVMKQKRQREEQDSRNGEASSTELRAPTLWASPLVVKHNKKNSPALSL. The disordered stretch occupies residues 248-277; sequence RKDRRGGRVMKQKRQREEQDSRNGEASSTE. The span at 249 to 261 shows a compositional bias: basic residues; sequence KDRRGGRVMKQKR. The NR LBD domain occupies 303–539; that stretch reads TAEQMVSALL…DLLLEMLDAH (237 aa). The transactivation AF-2 stretch occupies residues 303–587; the sequence is TAEQMVSALL…KEEENMQNTL (285 aa).

Belongs to the nuclear hormone receptor family. NR3 subfamily. As to quaternary structure, binds DNA as a homodimer. Can form a heterodimer with ER-beta.

The protein resides in the nucleus. The steroid hormones and their receptors are involved in the regulation of eukaryotic gene expression and affect cellular proliferation and differentiation in target tissues. The polypeptide is Estrogen receptor (ESR1) (Taeniopygia guttata (Zebra finch)).